The following is a 380-amino-acid chain: Cytochrome b (380 aa).

The next 4 helical transmembrane spans lie at 33-53 (FGSL…FLAM), 77-98 (WLIR…YLHV), 113-133 (WNIG…GYVL), and 178-198 (FFAF…LHLL). Heme b contacts are provided by H83 and H97. 2 residues coordinate heme b: H182 and H196. H201 lines the a ubiquinone pocket. The next 4 membrane-spanning stretches (helical) occupy residues 226-246 (YKDL…ALFS), 288-308 (LGGV…PLLH), 320-340 (LTQI…WIGG), and 347-367 (FITV…IFIP).

The protein belongs to the cytochrome b family. As to quaternary structure, the cytochrome bc1 complex contains 3 respiratory subunits (MT-CYB, CYC1 and UQCRFS1), 2 core proteins (UQCRC1 and UQCRC2) and probably 6 low-molecular weight proteins. It depends on heme b as a cofactor.

It localises to the mitochondrion inner membrane. Functionally, component of the ubiquinol-cytochrome c reductase complex (complex III or cytochrome b-c1 complex) that is part of the mitochondrial respiratory chain. The b-c1 complex mediates electron transfer from ubiquinol to cytochrome c. Contributes to the generation of a proton gradient across the mitochondrial membrane that is then used for ATP synthesis. In Neocyttus rhomboidalis (Spiky oreo dory), this protein is Cytochrome b (mt-cyb).